The chain runs to 228 residues: Deoxyribose-phosphate aldolase (228 aa).

Asp96 serves as the catalytic Proton donor/acceptor. Residue Lys157 is the Schiff-base intermediate with acetaldehyde of the active site. Lys185 functions as the Proton donor/acceptor in the catalytic mechanism.

The protein belongs to the DeoC/FbaB aldolase family. DeoC type 1 subfamily.

The protein localises to the cytoplasm. It carries out the reaction 2-deoxy-D-ribose 5-phosphate = D-glyceraldehyde 3-phosphate + acetaldehyde. Its pathway is carbohydrate degradation; 2-deoxy-D-ribose 1-phosphate degradation; D-glyceraldehyde 3-phosphate and acetaldehyde from 2-deoxy-alpha-D-ribose 1-phosphate: step 2/2. Functionally, catalyzes a reversible aldol reaction between acetaldehyde and D-glyceraldehyde 3-phosphate to generate 2-deoxy-D-ribose 5-phosphate. The polypeptide is Deoxyribose-phosphate aldolase (Picosynechococcus sp. (strain ATCC 27264 / PCC 7002 / PR-6) (Agmenellum quadruplicatum)).